The sequence spans 872 residues: Potassium voltage-gated channel subfamily KQT member 3 (872 aa).

Residues 1-43 (MGLKARRAAGAAGGGGDGGGGGGGAANPAGGDAAAAGDEERKV) form a disordered region. The Cytoplasmic segment spans residues 1-120 (MGLKARRAAG…IYDALERPRG (120 aa)). Gly residues predominate over residues 11 to 25 (AAGGGGDGGGGGGGA). Over residues 26-36 (ANPAGGDAAAA) the composition is skewed to low complexity. Position 81 is a phosphothreonine (T81). A helical transmembrane segment spans residues 121 to 143 (WALLYHALVFLIVLGCLILAVLT). Over 144–153 (TFKEYETVSG) the chain is Extracellular. Residues 154-175 (DWLLLLETFAIFIFGAEFALRI) form a helical membrane-spanning segment. The Cytoplasmic segment spans residues 176–193 (WAAGCCCRYKGWRGRLKF). The helical transmembrane segment at 194 to 213 (ARKPLCMLDIFVLIASVPVV) threads the bilayer. The Extracellular portion of the chain corresponds to 214-225 (AVGNQGNVLATS). A helical; Voltage-sensor membrane pass occupies residues 226–244 (LRSLRFLQILRMLRMDRRG). R243 is a binding site for a 1,2-diacyl-sn-glycero-3-phospho-(1D-myo-inositol-4,5-bisphosphate). Topologically, residues 245–256 (GTWKLLGSAICA) are cytoplasmic. Position 246 is a phosphothreonine (T246). The chain crosses the membrane as a helical span at residues 257-282 (HSKELITAWYIGFLTLILSSFLVYLV). K259 is a binding site for a 1,2-diacyl-sn-glycero-3-phospho-(1D-myo-inositol-4,5-bisphosphate). Residues 283 to 302 (EKDVPEVDAQGEEMKEEFET) lie on the Extracellular side of the membrane. The segment at residues 303–315 (YADALWWGLITLA) is an intramembrane region (pore-forming). Residues 316-321 (TIGYGD) carry the Selectivity filter motif. The Extracellular portion of the chain corresponds to 316 to 326 (TIGYGDKTPKT). The chain crosses the membrane as a helical span at residues 327–353 (WEGRLIAATFSLIGVSFFALPAGILGS). The Cytoplasmic portion of the chain corresponds to 354–872 (GLALKVQEQH…SVWTPSNKPI (519 aa)). The mediates interaction with calmodulin stretch occupies residues 356–537 (ALKVQEQHRQ…RLYKKKFKET (182 aa)). Residue K366 coordinates a 1,2-diacyl-sn-glycero-3-phospho-(1D-myo-inositol-4,5-bisphosphate). Disordered regions lie at residues 575-611 (GPPS…PSTS) and 764-872 (ADLQ…NKPI). Composition is skewed to polar residues over residues 587–600 (KGSA…QSPR) and 843–872 (DPFT…NKPI).

Belongs to the potassium channel family. KQT (TC 1.A.1.15) subfamily. Kv7.3/KCNQ3 sub-subfamily. In terms of assembly, heterotetramer with KCNQ2; forms heterotetrameric native M-channel responsible for the M-current. Interacts with calmodulin; the interaction is calcium-independent, constitutive and participates in the proper assembly of a functional M-channel. Heteromultimer with KCNQ5. May associate with KCNE2. Interacts with IQCJ-SCHIP1. Interacts (via the pore module) with SLC5A3/SMIT1; forms a coregulatory complex that alters ion selectivity, voltage dependence and gating kinetics of the channel. In terms of processing, KCNQ2/KCNQ3 are ubiquitinated by NEDD4L. Ubiquitination leads to protein degradation. Degradation induced by NEDD4L is inhibited by USP36. As to expression, predominantly expressed in brain.

The protein localises to the cell membrane. It carries out the reaction K(+)(in) = K(+)(out). It catalyses the reaction Rb(+)(in) = Rb(+)(out). The enzyme catalyses Cs(+)(in) = Cs(+)(out). The catalysed reaction is Na(+)(in) = Na(+)(out). Its activity is regulated as follows. Phosphatidylinositol-4,5-bisphosphate (PIP2) potentiates the activation of KCNQ channels by enhancing the electro-mechanical coupling of the voltage-sensing domain (VSD) and the pore-forming domain (PD). In the closed state of the channel, PIP2 is anchored at the S2-S3 loop; upon channel activation, PIP2 interacts with the S4-S5 linker and is involved in channel gating. Calcium suppresses KCNQ2-KCNQ3 channel currents, with calcium-bound calmodulin inducing a change in channel configuration which leads to the reduction of channel affinity for PIP2 and subsequent current suppression. M-channel is activated by the anticonvulsant retigabine. Its function is as follows. Pore-forming subunit of the voltage-gated potassium (Kv) M-channel which is responsible for the M-current, a key controller of neuronal excitability. M-channel is composed of pore-forming subunits KCNQ2 and KCNQ3 assembled as heterotetramers. The native M-current has a slowly activating and deactivating potassium conductance which plays a critical role in determining the subthreshold electrical excitability of neurons as well as the responsiveness to synaptic inputs. M-channel is selectively permeable in vitro to other cations besides potassium, in decreasing order of affinity K(+) &gt; Rb(+) &gt; Cs(+) &gt; Na(+). M-channel association with SLC5A3/SMIT1 alters channel ion selectivity, increasing Na(+) and Cs(+) permeation relative to K(+). Suppressed by activation of M1 muscarinic acetylcholine receptors. KCNQ3 also associates with KCNQ5 to form a functional channel in vitro and may also contribute to the M-current in brain. The protein is Potassium voltage-gated channel subfamily KQT member 3 of Homo sapiens (Human).